We begin with the raw amino-acid sequence, 88 residues long: UPF0250 protein Ssed_3490 (88 aa).

It belongs to the UPF0250 family.

The sequence is that of UPF0250 protein Ssed_3490 from Shewanella sediminis (strain HAW-EB3).